A 348-amino-acid polypeptide reads, in one-letter code: Phosphate acyltransferase (348 aa).

The protein belongs to the PlsX family. Homodimer. Probably interacts with PlsY.

It is found in the cytoplasm. The enzyme catalyses a fatty acyl-[ACP] + phosphate = an acyl phosphate + holo-[ACP]. Its pathway is lipid metabolism; phospholipid metabolism. Functionally, catalyzes the reversible formation of acyl-phosphate (acyl-PO(4)) from acyl-[acyl-carrier-protein] (acyl-ACP). This enzyme utilizes acyl-ACP as fatty acyl donor, but not acyl-CoA. This chain is Phosphate acyltransferase, found in Synechocystis sp. (strain ATCC 27184 / PCC 6803 / Kazusa).